A 167-amino-acid polypeptide reads, in one-letter code: Probable host range protein 2 (167 aa).

Belongs to the poxviridae C7 protein family.

Its function is as follows. Plays a role for multiplication of the virus in different cell types. This Yaba monkey tumor virus (strain VR587) (YMTV) protein is Probable host range protein 2.